The primary structure comprises 103 residues: Integration host factor subunit beta (103 aa).

It belongs to the bacterial histone-like protein family. In terms of assembly, heterodimer of an alpha and a beta chain.

This protein is one of the two subunits of integration host factor, a specific DNA-binding protein that functions in genetic recombination as well as in transcriptional and translational control. This chain is Integration host factor subunit beta, found in Sinorhizobium medicae (strain WSM419) (Ensifer medicae).